The following is a 149-amino-acid chain: Oocyte-expressed protein homolog (149 aa).

The tract at residues 1–23 (MVDDAGTAESQRGKQTPADSLEQ) is disordered. Residues 8 to 18 (AESQRGKQTPA) are compositionally biased toward polar residues. The region spanning 49–110 (PLVFYLEAWL…SVQNRVKSML (62 aa)) is the KH; atypical domain.

The protein belongs to the KHDC1 family. Component of the subcortical maternal complex (SCMC), at least composed of NLRP5, KHDC3, OOEP, and TLE6. Within the complex, interacts with NLRP5, KHDC3 and TLE6. As part of the SCMC interacts with the SCMC-associated protein NLRP4F. The SCMC may facilitate translocation of its components between the nuclear and cytoplasmic compartments. Forms a scaffold complex with KHDC3/FILIA, and interacts with BLM and TRIM25 at DNA replication forks.

The protein resides in the cytoplasm. It localises to the nucleus. In terms of biological role, component of the subcortical maternal complex (SCMC), a multiprotein complex that plays a key role in early embryonic development. The SCMC complex is a structural constituent of cytoplasmic lattices, which consist in fibrous structures found in the cytoplasm of oocytes and preimplantation embryos. They are required to store maternal proteins critical for embryonic development, such as proteins that control epigenetic reprogramming of the preimplantation embryo, and prevent their degradation or activation. As part of the OOEP-KHDC3 scaffold, recruits BLM and TRIM25 to DNA replication forks, thereby promoting the ubiquitination of BLM by TRIM25, enhancing BLM retainment at replication forks and therefore promoting stalled replication fork restart. Positively regulates the homologous recombination-mediated DNA double-strand break (DSB) repair pathway by regulating ATM activation and RAD51 recruitment to DSBs in oocytes. Thereby contributes to oocyte survival and the resumption and completion of meiosis. The sequence is that of Oocyte-expressed protein homolog (OOEP) from Papio anubis (Olive baboon).